Reading from the N-terminus, the 459-residue chain is Phosphomethylpyrimidine synthase (459 aa).

Residues Asn-80, Met-109, Tyr-139, His-175, 195–197 (SRG), 236–239 (DSLR), and Glu-275 contribute to the substrate site. Residue His-279 coordinates Zn(2+). Substrate is bound at residue Tyr-302. Residue His-343 coordinates Zn(2+). Cys-423, Cys-426, and Cys-431 together coordinate [4Fe-4S] cluster.

The protein belongs to the ThiC family. [4Fe-4S] cluster is required as a cofactor.

It catalyses the reaction 5-amino-1-(5-phospho-beta-D-ribosyl)imidazole + S-adenosyl-L-methionine = 4-amino-2-methyl-5-(phosphooxymethyl)pyrimidine + CO + 5'-deoxyadenosine + formate + L-methionine + 3 H(+). Its pathway is cofactor biosynthesis; thiamine diphosphate biosynthesis. Catalyzes the synthesis of the hydroxymethylpyrimidine phosphate (HMP-P) moiety of thiamine from aminoimidazole ribotide (AIR) in a radical S-adenosyl-L-methionine (SAM)-dependent reaction. In Prochlorococcus marinus (strain MIT 9303), this protein is Phosphomethylpyrimidine synthase.